Consider the following 238-residue polypeptide: End-binding protein 1 (238 aa).

Residues Phe15–Asp117 form the Calponin-homology (CH) domain. An interaction with aurora kinase region spans residues Lys101–Gln238. Residues Lys124 to Ser165 show a composition bias toward polar residues. The tract at residues Lys124 to Lys169 is disordered. A Phosphoserine modification is found at Ser148. Residues Pro156 to Gln238 form the EB1 C-terminal domain.

This sequence belongs to the MAPRE family. As to quaternary structure, homodimer; disulfide-linked and via interaction of the C-terminal EB1-specific domains. Interacts with BOP1 (via C-terminal WD repeats). Interacts with giardin subunit gamma, neurogenic locus notch homolog protein, GL50803_8358 and GL50803_11327. Interacts (via C-terminal residues 101-238) with aurora kinase. Interacts with tubulin gamma chain. Phosphorylated in vitro by aurora kinase. Phosphorylation is important for cell division.

Its subcellular location is the nucleus membrane. It is found in the cytoplasm. It localises to the cytoskeleton. The protein localises to the spindle. The protein resides in the nucleus envelope. Its subcellular location is the flagellum axoneme. It is found in the cell projection. It localises to the cilium. The protein localises to the flagellum. Involved in cell division. Involved in mitosis. Regulates dynamics of microtubules (MTs) during mitosis. Required for cytokinesis. Binds polymerized MTs in vitro. Is able to rescue a mitotic division defect, the proper positioning of the nucleus, of the S.cerevisiae BIM1 knockout mutant in a complementation assay. May play a role in spindle positioning and MT distribution. May be involved in MT nucleation for the formation of median bodies and in the biogenesis of flagella. Based on its localization to both the flagellar exit point and the distal flagellar tips, it may mediate the transition from anterograde to retrograde intraflagellar transport (IFT). In Giardia intestinalis (strain ATCC 50803 / WB clone C6) (Giardia lamblia), this protein is End-binding protein 1.